We begin with the raw amino-acid sequence, 203 residues long: 3-isopropylmalate dehydratase small subunit (203 aa).

This sequence belongs to the LeuD family. LeuD type 1 subfamily. As to quaternary structure, heterodimer of LeuC and LeuD.

It carries out the reaction (2R,3S)-3-isopropylmalate = (2S)-2-isopropylmalate. It functions in the pathway amino-acid biosynthesis; L-leucine biosynthesis; L-leucine from 3-methyl-2-oxobutanoate: step 2/4. In terms of biological role, catalyzes the isomerization between 2-isopropylmalate and 3-isopropylmalate, via the formation of 2-isopropylmaleate. The sequence is that of 3-isopropylmalate dehydratase small subunit from Pelagibacter ubique (strain HTCC1062).